The sequence spans 289 residues: 4-hydroxybenzoate octaprenyltransferase (289 aa).

Transmembrane regions (helical) follow at residues 19–39 (IPIL…SHGL), 42–62 (ISYL…GCII), 85–105 (GQLS…VAFI), 107–127 (VLFL…LAIL), 134–154 (FFAI…FMAF), 165–185 (AWIF…IYAL), 211–231 (ILLF…YCDF), 233–253 (SFFY…YFLY), and 265–285 (FSAN…QYII).

This sequence belongs to the UbiA prenyltransferase family. It depends on Mg(2+) as a cofactor.

It localises to the cell inner membrane. The enzyme catalyses all-trans-octaprenyl diphosphate + 4-hydroxybenzoate = 4-hydroxy-3-(all-trans-octaprenyl)benzoate + diphosphate. Its pathway is cofactor biosynthesis; ubiquinone biosynthesis. Catalyzes the prenylation of para-hydroxybenzoate (PHB) with an all-trans polyprenyl group. Mediates the second step in the final reaction sequence of ubiquinone-8 (UQ-8) biosynthesis, which is the condensation of the polyisoprenoid side chain with PHB, generating the first membrane-bound Q intermediate 3-octaprenyl-4-hydroxybenzoate. The sequence is that of 4-hydroxybenzoate octaprenyltransferase from Francisella tularensis subsp. holarctica (strain FTNF002-00 / FTA).